The following is a 296-amino-acid chain: Cell division protein DivIB (296 aa).

The Cytoplasmic portion of the chain corresponds to 1–29 (MTKEIPKINNEYLKEKRKKQRIQQRRVQR). The chain crosses the membrane as a helical span at residues 30-50 (MIVGILVVIVLLILVYMFTPI). One can recognise a POTRA domain in the interval 51 to 119 (SHIKSADIKG…NPIEVNVKEH (69 aa)). The Extracellular segment spans residues 51–296 (SHIKSADIKG…NKIKDEESSE (246 aa)). Positions 256–273 (NNGQTSSASAKEVQSGTA) are enriched in polar residues. Positions 256–296 (NNGQTSSASAKEVQSGTASEDKAKDDLQKALNKIKDEESSE) are disordered. The segment covering 274-296 (SEDKAKDDLQKALNKIKDEESSE) has biased composition (basic and acidic residues).

It belongs to the FtsQ/DivIB family. DivIB subfamily.

The protein resides in the cell membrane. Its function is as follows. Cell division protein that may be involved in stabilizing or promoting the assembly of the division complex. The sequence is that of Cell division protein DivIB from Staphylococcus pseudintermedius (strain HKU10-03).